The sequence spans 342 residues: 4-hydroxy-3-methylbut-2-enyl diphosphate reductase (342 aa).

Cys47 provides a ligand contact to [4Fe-4S] cluster. Residues His78 and His111 each coordinate (2E)-4-hydroxy-3-methylbut-2-enyl diphosphate. 2 residues coordinate dimethylallyl diphosphate: His78 and His111. 2 residues coordinate isopentenyl diphosphate: His78 and His111. Residue Cys133 coordinates [4Fe-4S] cluster. His161 contributes to the (2E)-4-hydroxy-3-methylbut-2-enyl diphosphate binding site. His161 contacts dimethylallyl diphosphate. Residue His161 coordinates isopentenyl diphosphate. The active-site Proton donor is the Glu163. Thr201 contributes to the (2E)-4-hydroxy-3-methylbut-2-enyl diphosphate binding site. Residue Cys231 coordinates [4Fe-4S] cluster. Positions 259, 260, 261, and 303 each coordinate (2E)-4-hydroxy-3-methylbut-2-enyl diphosphate. Residues Ser259, Ser260, Asn261, and Ser303 each coordinate dimethylallyl diphosphate. Isopentenyl diphosphate contacts are provided by Ser259, Ser260, Asn261, and Ser303.

The protein belongs to the IspH family. Requires [4Fe-4S] cluster as cofactor.

It catalyses the reaction isopentenyl diphosphate + 2 oxidized [2Fe-2S]-[ferredoxin] + H2O = (2E)-4-hydroxy-3-methylbut-2-enyl diphosphate + 2 reduced [2Fe-2S]-[ferredoxin] + 2 H(+). The catalysed reaction is dimethylallyl diphosphate + 2 oxidized [2Fe-2S]-[ferredoxin] + H2O = (2E)-4-hydroxy-3-methylbut-2-enyl diphosphate + 2 reduced [2Fe-2S]-[ferredoxin] + 2 H(+). It functions in the pathway isoprenoid biosynthesis; dimethylallyl diphosphate biosynthesis; dimethylallyl diphosphate from (2E)-4-hydroxy-3-methylbutenyl diphosphate: step 1/1. The protein operates within isoprenoid biosynthesis; isopentenyl diphosphate biosynthesis via DXP pathway; isopentenyl diphosphate from 1-deoxy-D-xylulose 5-phosphate: step 6/6. Catalyzes the conversion of 1-hydroxy-2-methyl-2-(E)-butenyl 4-diphosphate (HMBPP) into a mixture of isopentenyl diphosphate (IPP) and dimethylallyl diphosphate (DMAPP). Acts in the terminal step of the DOXP/MEP pathway for isoprenoid precursor biosynthesis. The protein is 4-hydroxy-3-methylbut-2-enyl diphosphate reductase of Anaplasma marginale (strain St. Maries).